An 800-amino-acid polypeptide reads, in one-letter code: Endonuclease MutS2 (800 aa).

336–343 (GPNTGGKT) contacts ATP. The region spanning 725–800 (LDLRGVRYEA…GDGATIVELK (76 aa)) is the Smr domain.

This sequence belongs to the DNA mismatch repair MutS family. MutS2 subfamily. As to quaternary structure, homodimer. Binds to stalled ribosomes, contacting rRNA.

Functionally, endonuclease that is involved in the suppression of homologous recombination and thus may have a key role in the control of bacterial genetic diversity. Acts as a ribosome collision sensor, splitting the ribosome into its 2 subunits. Detects stalled/collided 70S ribosomes which it binds and splits by an ATP-hydrolysis driven conformational change. Acts upstream of the ribosome quality control system (RQC), a ribosome-associated complex that mediates the extraction of incompletely synthesized nascent chains from stalled ribosomes and their subsequent degradation. Probably generates substrates for RQC. The polypeptide is Endonuclease MutS2 (Leuconostoc mesenteroides subsp. mesenteroides (strain ATCC 8293 / DSM 20343 / BCRC 11652 / CCM 1803 / JCM 6124 / NCDO 523 / NBRC 100496 / NCIMB 8023 / NCTC 12954 / NRRL B-1118 / 37Y)).